A 481-amino-acid polypeptide reads, in one-letter code: UDP-N-acetylmuramoyl-L-alanyl-D-glutamate--L-lysine ligase (481 aa).

Ser-42 provides a ligand contact to UDP-N-acetyl-alpha-D-muramoyl-L-alanyl-D-glutamate. Gly-118–Thr-124 is a binding site for ATP. Residues Thr-160–Thr-161, Ser-187, and Arg-195 contribute to the UDP-N-acetyl-alpha-D-muramoyl-L-alanyl-D-glutamate site. Lys-229 carries the N6-carboxylysine modification. The L-lysine recognition motif motif lies at Asp-404–Asn-407.

It belongs to the MurCDEF family. MurE subfamily. Carboxylation is probably crucial for Mg(2+) binding and, consequently, for the gamma-phosphate positioning of ATP.

The protein resides in the cytoplasm. The enzyme catalyses UDP-N-acetyl-alpha-D-muramoyl-L-alanyl-D-glutamate + L-lysine + ATP = UDP-N-acetyl-alpha-D-muramoyl-L-alanyl-gamma-D-glutamyl-L-lysine + ADP + phosphate + H(+). Its pathway is cell wall biogenesis; peptidoglycan biosynthesis. Its function is as follows. Catalyzes the addition of L-lysine to the nucleotide precursor UDP-N-acetylmuramoyl-L-alanyl-D-glutamate (UMAG) in the biosynthesis of bacterial cell-wall peptidoglycan. This chain is UDP-N-acetylmuramoyl-L-alanyl-D-glutamate--L-lysine ligase, found in Streptococcus suis (strain 98HAH33).